A 1330-amino-acid chain; its full sequence is Pre-mRNA-splicing factor CWC22 homolog (1330 aa).

The disordered stretch occupies residues 1-377 (MGESDAESDS…AAKITERQRK (377 aa)). A compositionally biased stretch (low complexity) spans 9–36 (DSSSNSSSSDTSSGSDSDARSESSSSES). Basic and acidic residues predominate over residues 46–94 (QEESAKDAKKTDDTDRGEKRAKERDAGQDEQPTEQKKTPAAEPRSERQH). Over residues 99 to 113 (AGVEKQQEEAVAAAE) the composition is skewed to low complexity. A compositionally biased stretch (basic and acidic residues) spans 115–135 (ESEKLNEAKKVETPVQRKEEA). Polar residues predominate over residues 138 to 148 (SSVTKELNSPK). Positions 149 to 166 (AQEENAARELEERRKDEE) are enriched in basic and acidic residues. Residues 168-177 (PVTTNGSSKE) are compositionally biased toward polar residues. Phosphothreonine is present on residues threonine 191 and threonine 201. Basic and acidic residues-rich tracts occupy residues 191–201 (TADHIEEGEIT) and 208–236 (LPTKEEKKAVASKSPPKETQRKQSRSPDG). A phosphoserine mark is found at serine 219 and serine 221. Over residues 252 to 277 (SRRRRRSRSKGSRTRSRSKSPIRRRS) the composition is skewed to basic residues. Composition is skewed to basic and acidic residues over residues 278–307 (NSLERRRVERQRRHEERDKRDEERAKEREK) and 316–325 (SSRRRDDSRE). Residues 355 to 366 (TETNADNETVTE) are compositionally biased toward low complexity. Residues 420–603 (KKSIHGYINK…EVLFQIRKDG (184 aa)) enclose the MIF4G domain. The tract at residues 660-697 (REILGSDDGSSSGSGSGSDSDSDSDGESGSDAEKKAEA) is disordered. Positions 665–678 (SDDGSSSGSGSGSD) are enriched in low complexity. Over residues 679–689 (SDSDSDGESGS) the composition is skewed to acidic residues. The 117-residue stretch at 710-826 (ALRRTIYLTI…SWDVLECIQL (117 aa)) folds into the MI domain. The segment at 926-1330 (FRDGSAPAGN…RSSRRSKGRS (405 aa)) is disordered. Residues 941-951 (SSSSSSSSSSD) are compositionally biased toward low complexity. Over residues 952-963 (TDSEDSSEEDSS) the composition is skewed to acidic residues. Positions 964–976 (SDSSSESSSSDSS) are enriched in low complexity. The span at 980 to 1012 (KKKRKRKDKDKKKSKKATKEKSKKTKNKKKKKK) shows a compositional bias: basic residues. The segment covering 1013-1033 (AEKEQEKEKEKQRKSKKEKEK) has biased composition (basic and acidic residues). The span at 1034 to 1054 (DKKRKKEEKKAAKKKSKHRRK) shows a compositional bias: basic residues. Low complexity predominate over residues 1072–1082 (SESSDSSNSSS). Basic and acidic residues predominate over residues 1089–1110 (PQAKIKRQEHVEKNKFRGRTQD). Threonine 1108 bears the Phosphothreonine mark. Serine 1111, serine 1121, serine 1180, and serine 1181 each carry phosphoserine. 2 stretches are compositionally biased toward basic and acidic residues: residues 1133 to 1195 (RRRD…VAHD) and 1203 to 1320 (SRSY…SRRE). The residue at position 1182 (tyrosine 1182) is a Phosphotyrosine. Residues 1321-1330 (RSSRRSKGRS) show a composition bias toward basic residues.

This sequence belongs to the CWC22 family. In terms of assembly, component of the spliceosome C complex. Interacts with eIF4AIII.

It localises to the nucleus speckle. Its function is as follows. Required for pre-mRNA splicing and for exon-junction complex (EJC) assembly. Hinders eIF4AIII from non-specifically binding RNA and escorts it to the splicing machinery to promote EJC assembly on mature mRNAs. The polypeptide is Pre-mRNA-splicing factor CWC22 homolog (ncm) (Drosophila melanogaster (Fruit fly)).